A 583-amino-acid chain; its full sequence is ATP-dependent lipid A-core flippase (583 aa).

6 helical membrane passes run V32 to L52, L71 to I91, L115 to L135, I160 to V180, S259 to G279, and F286 to L306. The 279-residue stretch at F34–V312 folds into the ABC transmembrane type-1 domain. Residues I344–K580 form the ABC transporter domain. G378–T385 provides a ligand contact to ATP.

It belongs to the ABC transporter superfamily. Lipid exporter (TC 3.A.1.106) family. In terms of assembly, homodimer.

The protein localises to the cell inner membrane. It carries out the reaction ATP + H2O + lipid A-core oligosaccharideSide 1 = ADP + phosphate + lipid A-core oligosaccharideSide 2.. In terms of biological role, involved in lipopolysaccharide (LPS) biosynthesis. Translocates lipid A-core from the inner to the outer leaflet of the inner membrane. Transmembrane domains (TMD) form a pore in the inner membrane and the ATP-binding domain (NBD) is responsible for energy generation. In Methylobacillus flagellatus (strain ATCC 51484 / DSM 6875 / VKM B-1610 / KT), this protein is ATP-dependent lipid A-core flippase.